A 300-amino-acid polypeptide reads, in one-letter code: 4-hydroxy-tetrahydrodipicolinate synthase (300 aa).

T54 is a pyruvate binding site. The active-site Proton donor/acceptor is Y142. The active-site Schiff-base intermediate with substrate is the K170. I212 contacts pyruvate.

Belongs to the DapA family. As to quaternary structure, homotetramer; dimer of dimers.

Its subcellular location is the cytoplasm. It carries out the reaction L-aspartate 4-semialdehyde + pyruvate = (2S,4S)-4-hydroxy-2,3,4,5-tetrahydrodipicolinate + H2O + H(+). It functions in the pathway amino-acid biosynthesis; L-lysine biosynthesis via DAP pathway; (S)-tetrahydrodipicolinate from L-aspartate: step 3/4. Its function is as follows. Catalyzes the condensation of (S)-aspartate-beta-semialdehyde [(S)-ASA] and pyruvate to 4-hydroxy-tetrahydrodipicolinate (HTPA). This Halorhodospira halophila (strain DSM 244 / SL1) (Ectothiorhodospira halophila (strain DSM 244 / SL1)) protein is 4-hydroxy-tetrahydrodipicolinate synthase.